We begin with the raw amino-acid sequence, 403 residues long: Phosphoglycerate kinase (403 aa).

Substrate contacts are provided by residues 21-23 (DFN), Arg-37, 60-63 (HLGR), Arg-125, and Arg-158. ATP contacts are provided by residues Lys-209, Glu-332, and 359–362 (GGDS).

The protein belongs to the phosphoglycerate kinase family. In terms of assembly, monomer.

It localises to the cytoplasm. It carries out the reaction (2R)-3-phosphoglycerate + ATP = (2R)-3-phospho-glyceroyl phosphate + ADP. Its pathway is carbohydrate degradation; glycolysis; pyruvate from D-glyceraldehyde 3-phosphate: step 2/5. The protein is Phosphoglycerate kinase of Koribacter versatilis (strain Ellin345).